The sequence spans 495 residues: COP9 signalosome complex subunit 2 (495 aa).

Positions 1-26 are disordered; the sequence is MGDEYMDDDEDYGFEYEDDSGSEPDV. A PCI domain is found at 254–416; the sequence is AHTDFFEAFK…GMIEMPKNKK (163 aa). Residues 426-468 form a disordered region; that stretch reads PNAGDQGTTKSDSKPGTSSEPSTTTSVTSSILQGPPATSSCHQ. Positions 430-441 are enriched in polar residues; it reads DQGTTKSDSKPG. The segment covering 442-455 has biased composition (low complexity); that stretch reads TSSEPSTTTSVTSS.

This sequence belongs to the CSN2 family. Component of the CSN complex, probably composed of csn-1, csn-2, csn-3, csn-4, csn-5, csn-6 and csn-7. Within the complex it probably interacts directly with csn-1, csn-3 and csn-4.

The protein resides in the cytoplasm. Its subcellular location is the nucleus. Its function is as follows. Essential component of the COP9 signalosome complex (CSN), a complex involved in various cellular and developmental processes. The CSN complex is an essential regulator of the ubiquitin (Ubl) conjugation pathway by mediating the deneddylation of the cullin subunits of the SCF-type E3 ligase complexes, leading to decrease the Ubl ligase activity of SCF. The CSN complex plays an essential role in embryogenesis and oogenesis and is required to regulate microtubule stability in the early embryo. Mediates mei-3/katanin targeting for degradation at the meiosis to mitosis transition via deneddylation of cul-3. In Caenorhabditis elegans, this protein is COP9 signalosome complex subunit 2 (csn-2).